The primary structure comprises 561 residues: Urocanate hydratase (561 aa).

Residues 52–53, Q130, 176–178, E196, R201, 242–243, 263–267, 273–274, and Y322 contribute to the NAD(+) site; these read GG, GMG, NA, QTSAH, and YL. C410 is a catalytic residue. G492 contacts NAD(+).

This sequence belongs to the urocanase family. It depends on NAD(+) as a cofactor.

The protein resides in the cytoplasm. The catalysed reaction is 4-imidazolone-5-propanoate = trans-urocanate + H2O. It participates in amino-acid degradation; L-histidine degradation into L-glutamate; N-formimidoyl-L-glutamate from L-histidine: step 2/3. Its function is as follows. Catalyzes the conversion of urocanate to 4-imidazolone-5-propionate. In Salmonella choleraesuis (strain SC-B67), this protein is Urocanate hydratase.